The chain runs to 29 residues: Cytochrome b6-f complex subunit 8 (29 aa).

The helical transmembrane segment at 3 to 23 (ILSISWAFLMVVFTFSLSLVV) threads the bilayer.

It belongs to the PetN family. In terms of assembly, the 4 large subunits of the cytochrome b6-f complex are cytochrome b6, subunit IV (17 kDa polypeptide, PetD), cytochrome f and the Rieske protein, while the 4 small subunits are PetG, PetL, PetM and PetN. The complex functions as a dimer.

Its subcellular location is the plastid. The protein resides in the chloroplast thylakoid membrane. Component of the cytochrome b6-f complex, which mediates electron transfer between photosystem II (PSII) and photosystem I (PSI), cyclic electron flow around PSI, and state transitions. The sequence is that of Cytochrome b6-f complex subunit 8 from Chara vulgaris (Common stonewort).